The following is a 348-amino-acid chain: Anthranilate phosphoribosyltransferase (348 aa).

5-phospho-alpha-D-ribose 1-diphosphate-binding positions include Gly-81, 84–85 (GD), 91–94 (NVST), 109–117 (KHGNRAVSG), and Ser-121. Gly-81 is an anthranilate binding site. Residue Ser-93 coordinates Mg(2+). Residue Asn-112 coordinates anthranilate. Arg-167 lines the anthranilate pocket. Mg(2+) is bound by residues Asp-226 and Glu-227.

It belongs to the anthranilate phosphoribosyltransferase family. As to quaternary structure, homodimer. Mg(2+) serves as cofactor.

It catalyses the reaction N-(5-phospho-beta-D-ribosyl)anthranilate + diphosphate = 5-phospho-alpha-D-ribose 1-diphosphate + anthranilate. It functions in the pathway amino-acid biosynthesis; L-tryptophan biosynthesis; L-tryptophan from chorismate: step 2/5. Functionally, catalyzes the transfer of the phosphoribosyl group of 5-phosphorylribose-1-pyrophosphate (PRPP) to anthranilate to yield N-(5'-phosphoribosyl)-anthranilate (PRA). In Azotobacter vinelandii (strain DJ / ATCC BAA-1303), this protein is Anthranilate phosphoribosyltransferase.